Consider the following 397-residue polypeptide: Elongation factor Tu (397 aa).

The 197-residue stretch at 10–206 (KPHVNIGTIG…AVDQNIPEPQ (197 aa)) folds into the tr-type G domain. The interval 19 to 26 (GHIDHGKT) is G1. 19–26 (GHIDHGKT) serves as a coordination point for GTP. T26 is a Mg(2+) binding site. Positions 62–66 (GITIS) are G2. The segment at 83–86 (DCPG) is G3. Residues 83 to 87 (DCPGH) and 138 to 141 (NKSD) contribute to the GTP site. The interval 138 to 141 (NKSD) is G4. The tract at residues 176–178 (SAL) is G5.

The protein belongs to the TRAFAC class translation factor GTPase superfamily. Classic translation factor GTPase family. EF-Tu/EF-1A subfamily. Monomer.

It localises to the cytoplasm. It catalyses the reaction GTP + H2O = GDP + phosphate + H(+). Its function is as follows. GTP hydrolase that promotes the GTP-dependent binding of aminoacyl-tRNA to the A-site of ribosomes during protein biosynthesis. The chain is Elongation factor Tu from Thermobifida fusca (strain YX).